Reading from the N-terminus, the 81-residue chain is MSHSVKIYDTCIGCTQCVRACPTDVLEMIPWDGCKAKQIAPAPRTEDCVGCKRCESACPTDFLSVRVYLSNETTRSMGLAY.

4Fe-4S ferredoxin-type domains follow at residues 2-31 (SHSVKIYDTCIGCTQCVRACPTDVLEMIPW) and 39-68 (IAPAPRTEDCVGCKRCESACPTDFLSVRVY). [4Fe-4S] cluster-binding residues include Cys11, Cys14, Cys17, Cys21, Cys48, Cys51, Cys54, and Cys58.

As to quaternary structure, the eukaryotic PSI reaction center is composed of at least 11 subunits. The cofactor is [4Fe-4S] cluster.

Its subcellular location is the plastid. The protein localises to the chloroplast thylakoid membrane. It carries out the reaction reduced [plastocyanin] + hnu + oxidized [2Fe-2S]-[ferredoxin] = oxidized [plastocyanin] + reduced [2Fe-2S]-[ferredoxin]. Its function is as follows. Apoprotein for the two 4Fe-4S centers FA and FB of photosystem I (PSI); essential for photochemical activity. FB is the terminal electron acceptor of PSI, donating electrons to ferredoxin. The C-terminus interacts with PsaA/B/D and helps assemble the protein into the PSI complex. Required for binding of PsaD and PsaE to PSI. PSI is a plastocyanin-ferredoxin oxidoreductase, converting photonic excitation into a charge separation, which transfers an electron from the donor P700 chlorophyll pair to the spectroscopically characterized acceptors A0, A1, FX, FA and FB in turn. The sequence is that of Photosystem I iron-sulfur center from Chloranthus spicatus (Chulantree).